The sequence spans 388 residues: Carbamoyl phosphate synthase small chain (388 aa).

Residues 1 to 194 (MAQNPLSKPT…WPEGYARQEA (194 aa)) are CPSase. L-glutamine-binding residues include S53, G246, and G248. The Glutamine amidotransferase type-1 domain occupies 198-387 (KVVAIDYGAK…AAAMDAQKAE (190 aa)). C276 functions as the Nucleophile in the catalytic mechanism. Residues L277, Q280, N318, G320, and F321 each coordinate L-glutamine. Catalysis depends on residues H360 and E362.

Belongs to the CarA family. Composed of two chains; the small (or glutamine) chain promotes the hydrolysis of glutamine to ammonia, which is used by the large (or ammonia) chain to synthesize carbamoyl phosphate. Tetramer of heterodimers (alpha,beta)4.

The enzyme catalyses hydrogencarbonate + L-glutamine + 2 ATP + H2O = carbamoyl phosphate + L-glutamate + 2 ADP + phosphate + 2 H(+). The catalysed reaction is L-glutamine + H2O = L-glutamate + NH4(+). It functions in the pathway amino-acid biosynthesis; L-arginine biosynthesis; carbamoyl phosphate from bicarbonate: step 1/1. It participates in pyrimidine metabolism; UMP biosynthesis via de novo pathway; (S)-dihydroorotate from bicarbonate: step 1/3. Its function is as follows. Small subunit of the glutamine-dependent carbamoyl phosphate synthetase (CPSase). CPSase catalyzes the formation of carbamoyl phosphate from the ammonia moiety of glutamine, carbonate, and phosphate donated by ATP, constituting the first step of 2 biosynthetic pathways, one leading to arginine and/or urea and the other to pyrimidine nucleotides. The small subunit (glutamine amidotransferase) binds and cleaves glutamine to supply the large subunit with the substrate ammonia. This is Carbamoyl phosphate synthase small chain from Ruegeria pomeroyi (strain ATCC 700808 / DSM 15171 / DSS-3) (Silicibacter pomeroyi).